The chain runs to 126 residues: MFITLMKSKIHRATVTEANLDYVGSITIDEDLMEAADIMENEKVQVVDNNNGNRFETYVIKGERGSGMICLNGAAARLVHPGDLIIIISYGIFDREEAKTFNPKVVFVDEKNKIINIKSEEKHGEI.

Serine 25 (schiff-base intermediate with substrate; via pyruvic acid) is an active-site residue. Serine 25 carries the pyruvic acid (Ser) modification. Residue threonine 57 participates in substrate binding. Tyrosine 58 serves as the catalytic Proton donor. Residue 73-75 coordinates substrate; that stretch reads GAA.

The protein belongs to the PanD family. Heterooctamer of four alpha and four beta subunits. Pyruvate serves as cofactor. In terms of processing, is synthesized initially as an inactive proenzyme, which is activated by self-cleavage at a specific serine bond to produce a beta-subunit with a hydroxyl group at its C-terminus and an alpha-subunit with a pyruvoyl group at its N-terminus.

It is found in the cytoplasm. The catalysed reaction is L-aspartate + H(+) = beta-alanine + CO2. It functions in the pathway cofactor biosynthesis; (R)-pantothenate biosynthesis; beta-alanine from L-aspartate: step 1/1. Its function is as follows. Catalyzes the pyruvoyl-dependent decarboxylation of aspartate to produce beta-alanine. The protein is Aspartate 1-decarboxylase of Acetivibrio thermocellus (strain ATCC 27405 / DSM 1237 / JCM 9322 / NBRC 103400 / NCIMB 10682 / NRRL B-4536 / VPI 7372) (Clostridium thermocellum).